Consider the following 217-residue polypeptide: Probable coenzyme A transferase subunit beta (217 aa).

Glutamate 50 is a catalytic residue.

The protein belongs to the 3-oxoacid CoA-transferase subunit B family. In terms of assembly, heterodimer of a subunit alpha and a subunit beta.

The protein is Probable coenzyme A transferase subunit beta (yodR) of Bacillus subtilis (strain 168).